We begin with the raw amino-acid sequence, 296 residues long: NAD kinase (296 aa).

Catalysis depends on D73, which acts as the Proton acceptor. NAD(+) is bound by residues 73-74 (DG), K78, 151-152 (NE), R178, D180, and 191-196 (TAHAMS).

It belongs to the NAD kinase family. Requires a divalent metal cation as cofactor.

It is found in the cytoplasm. It carries out the reaction NAD(+) + ATP = ADP + NADP(+) + H(+). Functionally, involved in the regulation of the intracellular balance of NAD and NADP, and is a key enzyme in the biosynthesis of NADP. Catalyzes specifically the phosphorylation on 2'-hydroxyl of the adenosine moiety of NAD to yield NADP. In Francisella tularensis subsp. novicida (strain U112), this protein is NAD kinase.